A 347-amino-acid chain; its full sequence is Phosphate acyltransferase (347 aa).

Belongs to the PlsX family. In terms of assembly, homodimer. Probably interacts with PlsY.

The protein localises to the cytoplasm. The catalysed reaction is a fatty acyl-[ACP] + phosphate = an acyl phosphate + holo-[ACP]. It participates in lipid metabolism; phospholipid metabolism. In terms of biological role, catalyzes the reversible formation of acyl-phosphate (acyl-PO(4)) from acyl-[acyl-carrier-protein] (acyl-ACP). This enzyme utilizes acyl-ACP as fatty acyl donor, but not acyl-CoA. In Dehalococcoides mccartyi (strain ATCC BAA-2100 / JCM 16839 / KCTC 5957 / BAV1), this protein is Phosphate acyltransferase.